The primary structure comprises 310 residues: tRNA dimethylallyltransferase (310 aa).

5 to 12 serves as a coordination point for ATP; it reads GPTASGKS. 7-12 is a substrate binding site; it reads TASGKS. The interaction with substrate tRNA stretch occupies residues 30–33; sequence DSMQ.

Belongs to the IPP transferase family. In terms of assembly, monomer. The cofactor is Mg(2+).

The enzyme catalyses adenosine(37) in tRNA + dimethylallyl diphosphate = N(6)-dimethylallyladenosine(37) in tRNA + diphosphate. Catalyzes the transfer of a dimethylallyl group onto the adenine at position 37 in tRNAs that read codons beginning with uridine, leading to the formation of N6-(dimethylallyl)adenosine (i(6)A). This is tRNA dimethylallyltransferase from Rhodopseudomonas palustris (strain HaA2).